The primary structure comprises 205 residues: Putative 3-methyladenine DNA glycosylase (205 aa).

This sequence belongs to the DNA glycosylase MPG family.

The protein is Putative 3-methyladenine DNA glycosylase of Bacillus thuringiensis (strain Al Hakam).